The primary structure comprises 156 residues: Putative pre-16S rRNA nuclease (156 aa).

It belongs to the YqgF nuclease family.

It is found in the cytoplasm. Functionally, could be a nuclease involved in processing of the 5'-end of pre-16S rRNA. This Nocardioides sp. (strain ATCC BAA-499 / JS614) protein is Putative pre-16S rRNA nuclease.